The sequence spans 175 residues: ATP synthase subunit b, chloroplastic (175 aa).

Residues 21 to 40 form a helical membrane-spanning segment; the sequence is LLESNVINIIILISLLIYLG.

It belongs to the ATPase B chain family. In terms of assembly, F-type ATPases have 2 components, F(1) - the catalytic core - and F(0) - the membrane proton channel. F(1) has five subunits: alpha(3), beta(3), gamma(1), delta(1), epsilon(1). F(0) has four main subunits: a(1), b(1), b'(1) and c(10-14). The alpha and beta chains form an alternating ring which encloses part of the gamma chain. F(1) is attached to F(0) by a central stalk formed by the gamma and epsilon chains, while a peripheral stalk is formed by the delta, b and b' chains.

The protein resides in the plastid. It localises to the chloroplast thylakoid membrane. F(1)F(0) ATP synthase produces ATP from ADP in the presence of a proton or sodium gradient. F-type ATPases consist of two structural domains, F(1) containing the extramembraneous catalytic core and F(0) containing the membrane proton channel, linked together by a central stalk and a peripheral stalk. During catalysis, ATP synthesis in the catalytic domain of F(1) is coupled via a rotary mechanism of the central stalk subunits to proton translocation. Functionally, component of the F(0) channel, it forms part of the peripheral stalk, linking F(1) to F(0). The protein is ATP synthase subunit b, chloroplastic of Cyanidium caldarium (Red alga).